A 44-amino-acid polypeptide reads, in one-letter code: Diuretic hormone (44 aa).

At valine 44 the chain carries Valine amide.

The protein localises to the secreted. Regulation of fluid secretion. Stimulates primary urine secretion by Malpighian tubules and causes a dose-dependent stimulation of cAMP levels in the tubules. May act as clearance peptide in that it may remove metabolic waste from the hemolymph. The polypeptide is Diuretic hormone (Stomoxys calcitrans (Stable fly)).